Reading from the N-terminus, the 2055-residue chain is MLETIDKNRALQAAERLQSKLKERGDVANEDKLSLLKSVLQSPLFSQILNLQTSLQQLKDQVNIATLATAAADHAHTPQFSSAVISNLQSESLLLSPNHGNLEALPGPGAPAVMDGKPTCDELDQLIKNMAQGRHVEIFELLKPPCGGLGFSVVGLRSENRGELGIFVQEIQEGSVAHRDGRLKETDQILAINGQVLDQTITHQQAISILQKAKDTVQLVIARGSLPPVSSPRISRSPSAASTISAHSNPMHWQHVETIELVNDGSGLGFGIIGGKATGVIVKTILPGGVADQHGRLCSGDHILKIGDTDLAGMSSEQVAQVLRQCGNRVKLMIARGAVEETPASSSLGITLSSSTSSTSEMRVDASTQKNDESETFDVELTKNVQGLGITIAGYIGDKKLEPSGIFVKSITKSSAVEHDGRIQIGDQIIAVDGTNLQGFTNQQAVEVLRHTGQTVRLTLMRKGASQEAELTSRGDTAKDVDLPAENCEKDEESLSLKRNTSILPIEEEGFPLLSAELEEAEDVQQEAALLTKWQRIMGINYEIVVAHVSKFSENSGLGISLEATVGHHFIRSVLPEGPVGHSGKLFSGDELLEVNGINLLGENHQDVVNILKELPIDVTMVCCRRTVPPIALSEMDSLDINDLELTEKPHIDLGEFIGSSETEDPMLAMSDVDQNAEEIQTPLAMWEAGGQSIELEKGSRGLGFSILDYQDPIDPANTVIVIRSLVPGGIAEKDGRLFPGDRLMFVNDINLENSTLEEAVEALKGAPSGMVRIGVAKPLPLSPEEGYVSAKEDAFLCSPHACKESGLSDKALFRADLALIDTPDAESIAESRFESQFSPDNDSVYSTQASIFSLHDGTCSDGMNYGPSLPSSPPKDVTSSSEVVLGLHLSLEELYTQNLLQRQHAGSPPTDMRPAPTSGFPISDYTTTNAVEQKYECANPVAWPHSQLPSSLSTSELAPALPAVAQKYLTDQSSLASDAESVNLQSMSQEAFERTVTIAKGSSSLGMTVSANKDGLGVIVRSIIHGGAISRDGRIAVGDCILSINEESTISLTNAQARAMLRRHSLIGPDIKITYVPAEHLEEFRVSFGQQAGGIMALDIFSSYTGRDIPELPEREEGEGEESELQNAAYSSWSQPRRVELWREPSKSLGISIVGGRGMGSRLSNGEVMRGIFIKHVLEDSPAGKNGTLKPGDRIIEVDGMDLRDASHEQAVEAIRKAGNPVVFMVQSIINRPRKSPLPSLPHSLYPKYSFSSTNPFADSLQLTTDQAPSQSESETEKPALCNVPPSSPSVFSEMGSDCAQPSATAVSEDEDKEDEFGYSWKNIQERYGSLTGQLHVIELEKGQSGLGLSLAGNKDRTRMSVFIVGIDPTGAAGRDGRLQIADELLEINGQILYGRSHQNASSIIKCAPSKVKIIFIRNADAVNQMAVCPGIAADSPSSTSDSPQNKEVEPCSTTSASAADLSSLTDVYQLELPKDQGGLGIAICEEDTINGVMIESLTEHGGAAKDGRLKPGDHILAVDDEVVAGCPVEKFISLLKTAKATVKLTVRAENPACPAVPSSAVTVSGERKDNSQTPAVPAPDLEPIPSTSRSSTPAVFASDPATCPIIPGCETTIEISKGQTGLGLSIVGGSDTLLGAIIIHEVYEEGAACKDGRLWAGDQILEVNGIDLRKATHDEAINVLRQTPQRVRLTLYRDEAPYKEEDVCDTFTIELQKRPGKGLGLSIVGKRNDTGVFVSDIVKGGIADADGRLMQGDQILMVNGEDVRHATQEAVAALLKCSLGAVTLEVGRVKAAPFHSERRPSQSSQVSESSLSSFTPPLSGINTSESLESNSKKNALASEIQGLRTVEIKKGPADSLGLSIAGGVGSPLGDVPIFIAMMHPNGVAAQTQKLRVGDRIVTICGTSTDGMTHTQAVNLMKNASGSIEVQVVAGGDVSVVTGHQQELANPCLAFTGLTSSSIFPDDLGPPQSKTITLDRGPDGLGFSIVGGYGSPHGDLPIYVKTVFAKGAAAEDGRLKRGDQIIAVNGQSLEGVTHEEAVAILKRTKGTVTLMVLS.

The L27 domain maps to 1–63 (MLETIDKNRA…SLQQLKDQVN (63 aa)). The PDZ 1 domain maps to 138 to 225 (IFELLKPPCG…TVQLVIARGS (88 aa)). S231 is subject to Phosphoserine. In terms of domain architecture, PDZ 2 spans 258–338 (TIELVNDGSG…RVKLMIARGA (81 aa)). The span at 348-360 (LGITLSSSTSSTS) shows a compositional bias: low complexity. Residues 348–372 (LGITLSSSTSSTSEMRVDASTQKND) are disordered. PDZ domains follow at residues 378 to 464 (DVEL…MRKG), 546 to 627 (VAHV…CRRT), and 693 to 779 (SIEL…VAKP). Phosphoserine is present on residues S783 and S1066. Positions 996–1077 (TVTIAKGSSS…IGPDIKITYV (82 aa)) constitute a PDZ 6 domain. The tract at residues 1111-1130 (PELPEREEGEGEESELQNAA) is disordered. In terms of domain architecture, PDZ 7 spans 1139 to 1231 (RVELWREPSK…PVVFMVQSII (93 aa)). An Omega-N-methylarginine modification is found at R1158. The segment covering 1264–1274 (LTTDQAPSQSE) has biased composition (polar residues). Positions 1264–1299 (LTTDQAPSQSESETEKPALCNVPPSSPSVFSEMGSD) are disordered. Residues 1338-1421 (VIELEKGQSG…KVKIIFIRNA (84 aa)) enclose the PDZ 8 domain. Low complexity predominate over residues 1435–1445 (ADSPSSTSDSP). The interval 1435–1459 (ADSPSSTSDSPQNKEVEPCSTTSAS) is disordered. The region spanning 1471–1552 (QLELPKDQGG…TVKLTVRAEN (82 aa)) is the PDZ 9 domain. The segment at 1557–1597 (AVPSSAVTVSGERKDNSQTPAVPAPDLEPIPSTSRSSTPAV) is disordered. 2 consecutive PDZ domains span residues 1614–1697 (TIEI…YRDE) and 1710–1792 (TIEL…GRVK). A disordered region spans residues 1795-1834 (PFHSERRPSQSSQVSESSLSSFTPPLSGINTSESLESNSK). Phosphoserine occurs at positions 1803 and 1809. Residues 1803 to 1815 (SQSSQVSESSLSS) show a composition bias toward low complexity. Over residues 1816–1834 (FTPPLSGINTSESLESNSK) the composition is skewed to polar residues. PDZ domains lie at 1847–1933 (TVEI…VAGG) and 1972–2055 (TITL…MVLS).

In terms of assembly, interacts with CLDN5, DLG4, GRIN1, SYNGAP1, CAMK2A and CAMK2B, HTR2A, HTR2B, HTR2C, PLEKHA1/TAPP1 and PLEKHA2/TAPP2. Interacts with F11R/JAM, CLDN1, NG2, CXADR, CRB1, MPP4 and PALS1. Interacts with FAT4 (via cytoplasmic domain). Interacts with DLL1. In terms of tissue distribution, in the brain, it is strongly expressed in the choroid plexus. Within the hippocampal formation, strongest expression was seen in the soma of CA1-4 pyramidal cells. Expressed in most neocortical regions with the strongest expression in piriform cortex and amygdaloid nuclei but also detected in the subiculum and olfactory bulb. In the cerebellum, the highest level of expression was found in Purkinje cells. Moderately expressed in the granular layer and molecular layer. Expressed in the pontine nuclei, parts of spinal trigeminal nuclei, and the principal sensory trigeminal nuclei of the metencephalon. Expressed in all thalamic and hypothalamic nuclei, and the substantia nigra (at protein level). Ubiquitously expressed.

It is found in the cell membrane. The protein localises to the apical cell membrane. The protein resides in the postsynaptic density. It localises to the cell projection. Its subcellular location is the dendrite. It is found in the cell junction. The protein localises to the tight junction. The protein resides in the synapse. It localises to the synaptosome. In terms of biological role, member of the NMDAR signaling complex that may play a role in control of AMPAR potentiation and synaptic plasticity in excitatory synapses. Promotes clustering of HT2RC at the cell surface. This chain is Multiple PDZ domain protein (Mpdz), found in Mus musculus (Mouse).